The following is a 224-amino-acid chain: Uracil-DNA glycosylase (224 aa).

Residue D65 is the Proton acceptor of the active site.

The protein belongs to the uracil-DNA glycosylase (UDG) superfamily. UNG family.

The protein localises to the cytoplasm. It catalyses the reaction Hydrolyzes single-stranded DNA or mismatched double-stranded DNA and polynucleotides, releasing free uracil.. In terms of biological role, excises uracil residues from the DNA which can arise as a result of misincorporation of dUMP residues by DNA polymerase or due to deamination of cytosine. This is Uracil-DNA glycosylase from Buchnera aphidicola subsp. Baizongia pistaciae (strain Bp).